A 383-amino-acid chain; its full sequence is MPAFKSRIESALAARKAQGLNRSMNVVFAGNQSILEHEGRRYINFSSNDYLGLANDQALVRAWQQGLSVYGSGSGASPMVTGFSAAHSNLEAALTEWLGFERAILFGSGFSANQALLFTLLEKSDVLIQDRLNHASLMEAGALSTAKMKRFKHNDIKHLETLFTNEGNHLVVTEGVFSMDGDCAPLKDIAEVARLRNAWLAVDDAHGIGVLGEAGGGSCELANVKPEILVVTFGKAFGMSGAAILCDQATGDFLTQFARHHVYSTAMPPAQAYALTHAVSMIQEQSWRREKLVELNEVYQTNLSDLDGFVETDTPIKPFVIGESELALQVANACRQNGIWVTAIRPPTVPKGTSRLRITLTANHSTEQVKTLSIALKQALGAL.

A substrate-binding site is contributed by arginine 22. Residue 109 to 110 (GF) participates in pyridoxal 5'-phosphate binding. Histidine 134 contacts substrate. Pyridoxal 5'-phosphate-binding residues include serine 178, histidine 206, and threonine 232. Position 235 is an N6-(pyridoxal phosphate)lysine (lysine 235). Threonine 348 provides a ligand contact to substrate.

This sequence belongs to the class-II pyridoxal-phosphate-dependent aminotransferase family. BioF subfamily. In terms of assembly, homodimer. Pyridoxal 5'-phosphate is required as a cofactor.

It carries out the reaction 6-carboxyhexanoyl-[ACP] + L-alanine + H(+) = (8S)-8-amino-7-oxononanoate + holo-[ACP] + CO2. The protein operates within cofactor biosynthesis; biotin biosynthesis. Catalyzes the decarboxylative condensation of pimeloyl-[acyl-carrier protein] and L-alanine to produce 8-amino-7-oxononanoate (AON), [acyl-carrier protein], and carbon dioxide. This is 8-amino-7-oxononanoate synthase from Vibrio parahaemolyticus serotype O3:K6 (strain RIMD 2210633).